Reading from the N-terminus, the 137-residue chain is ATP synthase epsilon chain, chloroplastic (137 aa).

It belongs to the ATPase epsilon chain family. F-type ATPases have 2 components, CF(1) - the catalytic core - and CF(0) - the membrane proton channel. CF(1) has five subunits: alpha(3), beta(3), gamma(1), delta(1), epsilon(1). CF(0) has three main subunits: a, b and c.

It is found in the plastid. It localises to the chloroplast thylakoid membrane. Its function is as follows. Produces ATP from ADP in the presence of a proton gradient across the membrane. This Bigelowiella natans (Pedinomonas minutissima) protein is ATP synthase epsilon chain, chloroplastic.